The primary structure comprises 282 residues: E3 ubiquitin-protein ligase SIAH1 (282 aa).

Residues 1 to 17 are compositionally biased toward polar residues; sequence MSRQTATALPTGTSKCP. Residues 1 to 22 are disordered; sequence MSRQTATALPTGTSKCPPSQRV. Position 19 is a phosphoserine; by ATM and ATR (serine 19). Residues 41 to 76 form an RING-type zinc finger; it reads CPVCFDYVLPPILQCQSGHLVCSNCRPKLTCCPTCR. The segment at 90-282 is SBD; that stretch reads VANSVLFPCK…LGINVTISMC (193 aa). Residues 93–153 form an SIAH-type zinc finger; the sequence is SVLFPCKYAS…VMPHLMHQHK (61 aa). Zn(2+)-binding residues include cysteine 98, cysteine 105, histidine 117, cysteine 121, cysteine 128, cysteine 135, histidine 147, and histidine 152.

It belongs to the SINA (Seven in absentia) family. In terms of assembly, homodimer. Component of some large E3 complex composed of UBE2D1, SIAH1, CACYBP/SIP, SKP1, APC and TBL1X. Interacts with UBE2I. Interacts with alpha-tubulin. Interacts with PEG10, which may inhibit its activity. Interacts with PEG3 and HIPK2. Interacts with group 1 glutamate receptors GRM1 and GRM5. Interacts with DAB1, which may inhibit its activity. Interacts with UBE2E2. Interacts with SNCAIP. Interacts with HIPK2; the interaction is promoted by DAZAP2 and results in SIAH1-mediated ubiquitination and subsequent proteasomal degradation of HIPK2. Interacts with DAZAP2; the interaction is decreased following phosphorylation of DAZAP2 by HIPK2. Interacts with GAPDH; leading to stabilize SIAH1. Interacts with Bassoon/BSN and Piccolo/PLCO; these interactions negatively regulate SIAH1 E3 ligase activity. Interacts with DCC. Interacts with AXIN1; catalyzes AXIN1 ubiquitination and subsequent proteasome-mediated ubiquitin-dependent degradation. In terms of processing, phosphorylated on Ser-19 by ATM and ATR. This phosphorylation disrupts SIAH1 interaction with HIPK2, and subsequent proteasomal degradation of HIPK2.

The protein localises to the cytoplasm. It localises to the nucleus. It catalyses the reaction S-ubiquitinyl-[E2 ubiquitin-conjugating enzyme]-L-cysteine + [acceptor protein]-L-lysine = [E2 ubiquitin-conjugating enzyme]-L-cysteine + N(6)-ubiquitinyl-[acceptor protein]-L-lysine.. Its pathway is protein modification; protein ubiquitination. In terms of biological role, E3 ubiquitin-protein ligase that mediates ubiquitination and subsequent proteasomal degradation of target proteins. E3 ubiquitin ligases accept ubiquitin from an E2 ubiquitin-conjugating enzyme in the form of a thioester and then directly transfers the ubiquitin to targeted substrates. Mediates E3 ubiquitin ligase activity either through direct binding to substrates or by functioning as the essential RING domain subunit of larger E3 complexes. Triggers the ubiquitin-mediated degradation of many substrates, including proteins involved in transcription regulation (ELL2, MYB, POU2AF1, PML and RBBP8), a cell surface receptor (DCC), cytoplasmic signal transduction molecules (KLF10/TIEG1 and NUMB), an antiapoptotic protein (BAG1), a microtubule motor protein (KIF22), a protein involved in synaptic vesicle function in neurons (SYP), a structural protein (CTNNB1) and SNCAIP. Confers constitutive instability to HIPK2 through proteasomal degradation. It is thereby involved in many cellular processes such as apoptosis, tumor suppression, cell cycle, axon guidance, transcription, spermatogenesis and TNF-alpha signaling. Has some overlapping function with SIAH2. Induces apoptosis in cooperation with PEG3. Upon nitric oxid (NO) generation that follows apoptotic stimulation, interacts with S-nitrosylated GAPDH, mediating the translocation of GAPDH to the nucleus. GAPDH acts as a stabilizer of SIAH1, facilitating the degradation of nuclear proteins. Mediates ubiquitination and degradation of EGLN2 and EGLN3 in response to the unfolded protein response (UPR), leading to their degradation and subsequent stabilization of ATF4. Also part of the Wnt signaling pathway in which it mediates the Wnt-induced ubiquitin-mediated proteasomal degradation of AXIN1. This is E3 ubiquitin-protein ligase SIAH1 (Siah1) from Rattus norvegicus (Rat).